Consider the following 241-residue polypeptide: Octanoyltransferase (241 aa).

The 189-residue stretch at 50 to 238 (KIAHEQVWLL…AFEQIFGPTI (189 aa)) folds into the BPL/LPL catalytic domain. Substrate contacts are provided by residues 89 to 96 (RGGEFTYH), 169 to 171 (AIG), and 182 to 184 (GIS). Cysteine 200 (acyl-thioester intermediate) is an active-site residue.

The protein belongs to the LipB family.

It is found in the cytoplasm. The catalysed reaction is octanoyl-[ACP] + L-lysyl-[protein] = N(6)-octanoyl-L-lysyl-[protein] + holo-[ACP] + H(+). Its pathway is protein modification; protein lipoylation via endogenous pathway; protein N(6)-(lipoyl)lysine from octanoyl-[acyl-carrier-protein]: step 1/2. Its function is as follows. Catalyzes the transfer of endogenously produced octanoic acid from octanoyl-acyl-carrier-protein onto the lipoyl domains of lipoate-dependent enzymes. Lipoyl-ACP can also act as a substrate although octanoyl-ACP is likely to be the physiological substrate. In Bartonella bacilliformis (strain ATCC 35685 / KC583 / Herrer 020/F12,63), this protein is Octanoyltransferase.